The primary structure comprises 71 residues: Conotoxin AbVIG (71 aa).

A signal peptide spans 1–17 (VLIIAVLFLTACQLTTA). Positions 18-40 (ETSSRGKQKHRALRSTDKNSRMT) are excised as a propeptide. 3 disulfide bridges follow: Cys-43/Cys-57, Cys-50/Cys-61, and Cys-56/Cys-68.

It belongs to the conotoxin O1 superfamily. Expressed by the venom duct.

It is found in the secreted. This chain is Conotoxin AbVIG, found in Conus abbreviatus (Abbreviated cone).